A 190-amino-acid polypeptide reads, in one-letter code: RING finger protein 227 (190 aa).

The RING-type zinc finger occupies 18–81 (CNICFRPYNL…RRAVTCPFCR (64 aa)). Residues 108–147 (ARAEREGDPMGSPAKDSGEDGEDDDGEAESEKGAGPPSAG) form a disordered region. Acidic residues predominate over residues 126–135 (EDGEDDDGEA).

In Mus musculus (Mouse), this protein is RING finger protein 227.